The following is a 488-amino-acid chain: Dipeptidase 3 (488 aa).

The signal sequence occupies residues 1-35; sequence MQPTGPEGPRALSLRPLGHRLSLLGVLLIIPSLWV. Over residues 41–60 the composition is skewed to low complexity; sequence TPSLSSAPTSPGASSAMTTP. The interval 41 to 74 is disordered; sequence TPSLSSAPTSPGASSAMTTPGIPNDTTTSGVTSD. Intrachain disulfides connect C143-C222 and C294-C326. The N-linked (GlcNAc...) asparagine glycan is linked to N331. Residue S459 is the site of GPI-anchor amidated serine attachment. A propeptide spans 460 to 487 (removed in mature form); the sequence is KAPPCPLLGLVAAVTSPAFTLWLCCSGH.

Belongs to the metallo-dependent hydrolases superfamily. Peptidase M19 family. Homodimer; disulfide-linked. Interacts with TEX101; co-localized on the cell surface of spermatocytes, spermatids, and testicular spermatozoa, co-localized only in cytoplasmic droplets of caput and corpus epididymal sperm.

Its subcellular location is the membrane. Lacks dipeptidase activity and is unable to hydrolyze cystinyl-bis-glycine, leukotriene D4 and the beta-lactam antibiotic imipenem. The absence of activity may be due to the inability of serine (instead of aspartate found in DPEP1/2) at position 356 to function as the acid/base catalyst and activate the nucleophilic water/hydroxide. The protein is Dipeptidase 3 (Dpep3) of Rattus norvegicus (Rat).